The sequence spans 159 residues: RNA pyrophosphohydrolase (159 aa).

Residues 6–149 enclose the Nudix hydrolase domain; it reads GYRPNVGIVI…KRNVYRRMMK (144 aa). The Nudix box motif lies at 38-59; it reads GGINSGETAEQAMFRELFEEVG.

Belongs to the Nudix hydrolase family. RppH subfamily. Requires a divalent metal cation as cofactor.

Its function is as follows. Accelerates the degradation of transcripts by removing pyrophosphate from the 5'-end of triphosphorylated RNA, leading to a more labile monophosphorylated state that can stimulate subsequent ribonuclease cleavage. The chain is RNA pyrophosphohydrolase from Baumannia cicadellinicola subsp. Homalodisca coagulata.